The chain runs to 522 residues: F-box only protein 7 (522 aa).

The tract at residues 1–87 (MKLRVRLQKR…EDAIAAPNLP (87 aa)) is ubiquitin-like. Over residues 88–132 (SSTVSEHSSVQNNDQPSLATSSSQSNIQDAQLHDSLQGQATQSEV) the composition is skewed to polar residues. Residues 88 to 151 (SSTVSEHSSV…GQHFEAEAVP (64 aa)) are disordered. The segment at 91-128 (VSEHSSVQNNDQPSLATSSSQSNIQDAQLHDSLQGQAT) is important for interaction with PINK1. The important for interaction with CDK6 stretch occupies residues 128–168 (TQSEVWNDDSVSGPGQHFEAEAVPDVVDVEEGTGYYLAEPM). An important for dimerization and interaction with PSMF1 region spans residues 179-323 (PHSLEILYQS…PLLAFTRQAL (145 aa)). Residues 328–374 (VFGLVVLPLELKLRIFRLLDVRSVLSLSAVCRDLCITSNDQLLWRCL) enclose the F-box domain. An important for interaction with CDK6 region spans residues 380–522 (RDGSIRGRDT…WPTDSRLPFM (143 aa)). Omega-N-methylarginine occurs at positions 431 and 451. The RFDP motif motif lies at 481 to 484 (RFDP). The interval 484-522 (PVGPLPGPNPILPGRGGPSDRFPLRPSRGWPTDSRLPFM) is disordered. Position 518 is an asymmetric dimethylarginine (Arg518).

In terms of assembly, part of the SCF (SKP1-CUL1-F-box) E3 ubiquitin-protein ligase complex SCF(FBXO7) formed of CUL1, SKP1, RBX1 and FBXO7. Interacts via its C-terminal proline-rich region with DLGAP5. Interacts with BIRC2. Interacts with CDK6 and promotes its interaction with D-type cyclin. Interacts (via the N-terminal Ubl domain) with PRKN. Interacts (via N-terminal region) with PINK1. Interacts with PSMF1.

The protein localises to the cytoplasm. The protein resides in the nucleus. It is found in the mitochondrion. Its subcellular location is the cytosol. It participates in protein modification; protein ubiquitination. Substrate recognition component of a SCF (SKP1-CUL1-F-box protein) E3 ubiquitin-protein ligase complex which mediates the ubiquitination and subsequent proteasomal degradation of target proteins and plays a role in several biological processes such as cell cycle, cell proliferation, or maintenance of chromosome stability. Recognizes and ubiquitinates BIRC2 and the cell cycle regulator DLGAP5. Plays a role downstream of PINK1 in the clearance of damaged mitochondria via selective autophagy (mitophagy) by targeting PRKN to dysfunctional depolarized mitochondria. Promotes MFN1 ubiquitination. Mediates the ubiquitination and proteasomal degradation of UXT isoform 2, thereby impairing the NF-kappa-B signaling pathway. Inhibits NF-kappa-B pathway also by promoting the ubiquitinatioin of TRAF2. Affects the assembly state and activity of the proteasome in the cells including neurons by ubiquitinating the proteasomal subunit PSMA2 via 'Lys-63'-linked polyubiquitin chains. Promotes 'Lys-48'-linked polyubiquitination SIRT7, leading to the hydrogen peroxide-induced cell death. In Bos taurus (Bovine), this protein is F-box only protein 7 (FBXO7).